The sequence spans 253 residues: MEQIMASTVLPMRFSMLLRTIDPIKFLWSGALFLGVLSIFILITKLPVHILRIFYPPVSVFVHVGLFIVYIVSASYQAGSDKSDPKHLQSGPPWYITKSCSVASNKDNIGYCQQAKALFGFTIIIIVLYFVEIIVSVHSCFVTKEEKAERDELREEKRTMKEYEDMVLRTPRTFPMMSPALPSGGTTQMMPTMSSRSPEFSTFGHGSSDLPLRDHFSTPNPRPPAQQESSETLAPGNQPQMYFPPPPKKAAKV.

Helical transmembrane passes span 23–43 (PIKF…FILI), 53–73 (IFYP…YIVS), and 117–137 (ALFG…IVSV). The segment at 174–253 (FPMMSPALPS…PPPPKKAAKV (80 aa)) is disordered. Composition is skewed to polar residues over residues 184–200 (GGTT…SPEF) and 226–240 (QQES…NQPQ). Residues 242 to 253 (YFPPPPKKAAKV) show a composition bias toward pro residues.

It is found in the membrane. Its function is as follows. Involved in mycelium growth and repression of conidia formation by affecting the expression of brlA and abaA. Acts as a negative regulation factor for kojic acid production through affecting the expression of kojA, kojR and kojT. This chain is Kojic acid related protein 1, found in Aspergillus oryzae (strain ATCC 42149 / RIB 40) (Yellow koji mold).